A 514-amino-acid polypeptide reads, in one-letter code: Pantetheinase (514 aa).

The first 22 residues, 1-22, serve as a signal peptide directing secretion; the sequence is MITSRLLVYVAVLVLCVIKVSS. N39 carries N-linked (GlcNAc...) asparagine glycosylation. One can recognise a CN hydrolase domain in the interval 40–307; it reads ATLVPVSHEE…GKLLLSQLDS (268 aa). E80 (proton acceptor) is an active-site residue. 2 N-linked (GlcNAc...) asparagine glycosylation sites follow: N87 and N147. Residue K179 is the Proton donor of the active site. C212 serves as the catalytic Nucleophile. 2 N-linked (GlcNAc...) asparagine glycosylation sites follow: N316 and N354. D492 is lipidated: GPI-anchor amidated aspartate. The propeptide at 493–514 is removed in mature form; sequence PRSQVPGVMLLVIIPIVCSLSW.

This sequence belongs to the carbon-nitrogen hydrolase superfamily. BTD/VNN family. Monomer.

The protein localises to the cell membrane. The enzyme catalyses (R)-pantetheine + H2O = cysteamine + (R)-pantothenate. Functionally, amidohydrolase that hydrolyzes specifically one of the carboamide linkages in D-pantetheine thus recycling pantothenic acid (vitamin B5) and releasing cysteamine. The protein is Pantetheinase (VNN1) of Canis lupus familiaris (Dog).